Consider the following 471-residue polypeptide: N(6)-adenine-specific methyltransferase METTL4 (471 aa).

The protein belongs to the MT-A70-like family.

The protein localises to the nucleus. The enzyme catalyses a 2'-O-methyladenosine in U2 snRNA + S-adenosyl-L-methionine = an N(6)-methyl-2'-O-methyladenosine in U2 snRNA + S-adenosyl-L-homocysteine + H(+). It catalyses the reaction a 2'-deoxyadenosine in DNA + S-adenosyl-L-methionine = an N(6)-methyl-2'-deoxyadenosine in DNA + S-adenosyl-L-homocysteine + H(+). In terms of biological role, n(6)-adenine-specific methyltransferase that can methylate both RNAs and DNA. Acts as a N(6)-adenine-specific RNA methyltransferase by catalyzing formation of N6,2'-O-dimethyladenosine (m6A(m)) on internal positions of U2 small nuclear RNA (snRNA): methylates the 6th position of adenine residues with a pre-deposited 2'-O-methylation. Internal m6A(m) methylation of snRNAs regulates RNA splicing. Also able to act as a N(6)-adenine-specific DNA methyltransferase by mediating methylation of DNA on the 6th position of adenine (N(6)-methyladenosine). The existence of N(6)-methyladenosine (m6A) on DNA is however unclear in mammals, and additional evidences are required to confirm the role of the N(6)-adenine-specific DNA methyltransferase activity of METTL4 in vivo. Acts as a regulator of mitochondrial transcript levels and mitochondrial DNA (mtDNA) copy number by mediating mtDNA N(6)-methylation: m6A on mtDNA reduces transcription by repressing TFAM DNA-binding and bending. N(6)-methyladenosine deposition by METTL4 regulates Polycomb silencing by triggering ubiquitination and degradation of sensor proteins ASXL1 and MPND, leading to inactivation of the PR-DUB complex and subsequent preservation of Polycomb silencing. In Mus musculus (Mouse), this protein is N(6)-adenine-specific methyltransferase METTL4.